Consider the following 129-residue polypeptide: UPF0212 protein MA_1372 (129 aa).

It belongs to the UPF0212 family.

This is UPF0212 protein MA_1372 from Methanosarcina acetivorans (strain ATCC 35395 / DSM 2834 / JCM 12185 / C2A).